Reading from the N-terminus, the 248-residue chain is Ubiquinone/menaquinone biosynthesis C-methyltransferase UbiE (248 aa).

Positions 68 and 92 each coordinate S-adenosyl-L-methionine.

This sequence belongs to the class I-like SAM-binding methyltransferase superfamily. MenG/UbiE family.

It catalyses the reaction a 2-demethylmenaquinol + S-adenosyl-L-methionine = a menaquinol + S-adenosyl-L-homocysteine + H(+). It carries out the reaction a 2-methoxy-6-(all-trans-polyprenyl)benzene-1,4-diol + S-adenosyl-L-methionine = a 5-methoxy-2-methyl-3-(all-trans-polyprenyl)benzene-1,4-diol + S-adenosyl-L-homocysteine + H(+). Its pathway is quinol/quinone metabolism; menaquinone biosynthesis; menaquinol from 1,4-dihydroxy-2-naphthoate: step 2/2. It participates in cofactor biosynthesis; ubiquinone biosynthesis. Methyltransferase required for the conversion of demethylmenaquinol (DMKH2) to menaquinol (MKH2) and the conversion of 2-polyprenyl-6-methoxy-1,4-benzoquinol (DDMQH2) to 2-polyprenyl-3-methyl-6-methoxy-1,4-benzoquinol (DMQH2). The polypeptide is Ubiquinone/menaquinone biosynthesis C-methyltransferase UbiE (Rickettsia rickettsii (strain Iowa)).